An 829-amino-acid chain; its full sequence is Periplasmic nitrate reductase (829 aa).

A signal peptide (tat-type signal) is located at residues 1–29; that stretch reads MKMTRRAFVKANAAASAAAVAGITLPASA. Residues 41–97 enclose the 4Fe-4S Mo/W bis-MGD-type domain; the sequence is ITWDKAPCRFCGTGCSVLVGTQNGKVVATQGDPEAPVNKGLNCIKGYFLSKIMYGQD. Cysteine 48, cysteine 51, cysteine 55, and cysteine 83 together coordinate [4Fe-4S] cluster. Mo-bis(molybdopterin guanine dinucleotide) is bound by residues lysine 85, glutamine 152, asparagine 177, cysteine 181, 214–221, 245–249, 264–266, methionine 374, glutamine 378, asparagine 484, 510–511, lysine 533, aspartate 560, and 718–727; these read WGSNMAEM, STYYH, QSD, SD, and TGRVLEHWHT. Phenylalanine 794 is a substrate binding site. Asparagine 802 and lysine 819 together coordinate Mo-bis(molybdopterin guanine dinucleotide).

This sequence belongs to the prokaryotic molybdopterin-containing oxidoreductase family. NasA/NapA/NarB subfamily. Component of the periplasmic nitrate reductase NapAB complex composed of NapA and NapB. It depends on [4Fe-4S] cluster as a cofactor. Mo-bis(molybdopterin guanine dinucleotide) serves as cofactor. Predicted to be exported by the Tat system. The position of the signal peptide cleavage has not been experimentally proven.

The protein resides in the periplasm. It carries out the reaction 2 Fe(II)-[cytochrome] + nitrate + 2 H(+) = 2 Fe(III)-[cytochrome] + nitrite + H2O. In terms of biological role, catalytic subunit of the periplasmic nitrate reductase complex NapAB. Receives electrons from NapB and catalyzes the reduction of nitrate to nitrite. The protein is Periplasmic nitrate reductase of Vibrio campbellii (strain ATCC BAA-1116).